The sequence spans 342 residues: MSQPPAAHVPVLYTQVLEGLQVTENGTYLDGTFGRGGHARGVLEHLGPGGRLLVMDKDPEAVAVSQHTFGGDARVSIHPGSFARLVQVVAAATVDGILLDLGVSSPQLDVAGRGFSFGKDGPLDMRMDPDSGQSAAGWLAQATDREIADVLWTYGEERQSRRIARAIVARRGEQPLLRTAQLADLIASVMPRGDSKTHPATRSFQAIRIHINRELADLEAGLDAALGALKPGGRLAVISFHSLEDRIVKQFMARYAKAPPSNRRLPEAQPFVPTLQLVSGAIKADDSELAVNPRARSAVLRVAEKLGMENRESGMGKGHGAAASRFPTPDSRFPTSPNGDAP.

Residues 36–38, D56, F82, D100, and Q107 each bind S-adenosyl-L-methionine; that span reads GGH. The disordered stretch occupies residues 309 to 342; that stretch reads ENRESGMGKGHGAAASRFPTPDSRFPTSPNGDAP. The segment covering 333-342 has biased composition (polar residues); that stretch reads FPTSPNGDAP.

This sequence belongs to the methyltransferase superfamily. RsmH family.

It is found in the cytoplasm. The enzyme catalyses cytidine(1402) in 16S rRNA + S-adenosyl-L-methionine = N(4)-methylcytidine(1402) in 16S rRNA + S-adenosyl-L-homocysteine + H(+). In terms of biological role, specifically methylates the N4 position of cytidine in position 1402 (C1402) of 16S rRNA. This is Ribosomal RNA small subunit methyltransferase H from Xanthomonas campestris pv. campestris (strain 8004).